Reading from the N-terminus, the 508-residue chain is Purine-cytosine permease fcyB (508 aa).

The Cytoplasmic portion of the chain corresponds to 1 to 72; the sequence is MAGAFDFDLE…AEQTDTSVFN (72 aa). Residues 73-93 traverse the membrane as a helical segment; sequence IGSMWLAANMVVSSFAIGVLG. At 94 to 104 the chain is on the extracellular side; the sequence is KSVYSLGFVDA. The helical transmembrane segment at 105 to 125 threads the bilayer; the sequence is ILTVLFFNLLGIMTVCFFSCF. Over 126-147 the chain is Cytoplasmic; it reads GPFGLRQMVFSRLWFGWYVTKG. Residues 148-168 form a helical membrane-spanning segment; sequence FAVLNILACLGWSAANAIVGA. At 169 to 177 the chain is on the extracellular side; sequence QMLHAVNSD. A helical transmembrane segment spans residues 178–198; sequence VPGFAAILIISICTLLVTFAG. The Cytoplasmic portion of the chain corresponds to 199-200; sequence YK. Residues 201–221 form a helical membrane-spanning segment; it reads VVHLYEYWSWIPTFIVFMIIL. The Extracellular segment spans residues 222–243; that stretch reads GTFAHSGDFQNIPMGVGTSEMG. A helical membrane pass occupies residues 244–264; it reads SVLSFGSAVYGFATGWTSYAA. Residues 265-278 are Cytoplasmic-facing; sequence DYTVYQPANRSKRK. The helical transmembrane segment at 279-299 threads the bilayer; the sequence is IFLSTWLGLIVPLLFVEMLGV. Topologically, residues 300 to 323 are extracellular; the sequence is AVMTATDIKGSKYDVGYATSGNGG. Residues 324-344 traverse the membrane as a helical segment; it reads LIAAVLQPLGGFGDFCLVILA. Residues 345–374 lie on the Cytoplasmic side of the membrane; the sequence is LSIVANNCPNFYSVALTVQVLSRYAQRVPR. Residues 375 to 395 traverse the membrane as a helical segment; the sequence is FIWTLFGTGVSIAIAIPGYSH. Topologically, residues 396-404 are extracellular; that stretch reads FETVLENFM. A helical membrane pass occupies residues 405-425; it reads NFIAYWLAIYSAIAIMDHFVF. Residues 426–442 lie on the Cytoplasmic side of the membrane; sequence KRGFSGYVVENFDKREK. Residues 443-463 traverse the membrane as a helical segment; the sequence is LPVGIAATIAFGFGVAGMITG. Residues 464–477 lie on the Extracellular side of the membrane; the sequence is MSQPWYVGPIARHA. Residues 478 to 498 traverse the membrane as a helical segment; it reads AGGDVGFELGFAFAAFSYLCL. The Cytoplasmic portion of the chain corresponds to 499–508; it reads RPFEIKFFGR.

The protein belongs to the purine-cytosine permease (2.A.39) family.

The protein localises to the cell membrane. Its function is as follows. This permease has a broad specificity towards purines, and also transports cytosine, but neither uracil nor thymine. Contributes very little in purine uptake. Its major role may be the uptake of cytosine. This is Purine-cytosine permease fcyB (fcyB) from Emericella nidulans (strain FGSC A4 / ATCC 38163 / CBS 112.46 / NRRL 194 / M139) (Aspergillus nidulans).